Here is a 288-residue protein sequence, read N- to C-terminus: Elongation factor Ts (288 aa).

An involved in Mg(2+) ion dislocation from EF-Tu region spans residues 79–82 (TDFV).

It belongs to the EF-Ts family.

It is found in the cytoplasm. Its function is as follows. Associates with the EF-Tu.GDP complex and induces the exchange of GDP to GTP. It remains bound to the aminoacyl-tRNA.EF-Tu.GTP complex up to the GTP hydrolysis stage on the ribosome. The polypeptide is Elongation factor Ts (Ehrlichia ruminantium (strain Welgevonden)).